The sequence spans 485 residues: NADH-quinone oxidoreductase subunit N (485 aa).

Helical transmembrane passes span 8-28 (LIAL…MLSI), 35-55 (FLNA…LWFV), 71-91 (GFAM…CTFA), 105-125 (FYLL…ANHL), 127-147 (ALFL…GYAF), 159-179 (YTIL…LVYA), 203-223 (LLAG…LAPF), 235-255 (PAPV…GVVM), 271-291 (VVLG…ALSQ), 297-317 (LLGY…IALQ), 326-346 (VGVY…VVSL), 373-393 (AAVM…LGFI), 408-430 (WWLV…RVAV), and 455-475 (IVVL…QPLI).

The protein belongs to the complex I subunit 2 family. NDH-1 is composed of 13 different subunits. Subunits NuoA, H, J, K, L, M, N constitute the membrane sector of the complex.

Its subcellular location is the cell inner membrane. The enzyme catalyses a quinone + NADH + 5 H(+)(in) = a quinol + NAD(+) + 4 H(+)(out). Functionally, NDH-1 shuttles electrons from NADH, via FMN and iron-sulfur (Fe-S) centers, to quinones in the respiratory chain. The immediate electron acceptor for the enzyme in this species is believed to be ubiquinone. Couples the redox reaction to proton translocation (for every two electrons transferred, four hydrogen ions are translocated across the cytoplasmic membrane), and thus conserves the redox energy in a proton gradient. In Salmonella paratyphi C (strain RKS4594), this protein is NADH-quinone oxidoreductase subunit N.